The sequence spans 133 residues: MKTGYLWAIASALLVTVAQLLLKIGMSELPDLQLEKQWFDLHWLWANIIPISVVFVGLIGYVLSMVCWLLTLRTIPLNKAYPLISLSYVFVYILAVVLPWFQETLSWSKTIGIIFIMLGVWLISQKTEQTTSH.

The Cytoplasmic segment spans residues 1–5 (MKTGY). Residues 6–26 (LWAIASALLVTVAQLLLKIGM) form a helical membrane-spanning segment. Over 27-47 (SELPDLQLEKQWFDLHWLWAN) the chain is Periplasmic. The helical transmembrane segment at 48 to 68 (IIPISVVFVGLIGYVLSMVCW) threads the bilayer. Residues 51-125 (ISVVFVGLIG…IMLGVWLISQ (75 aa)) enclose the EamA domain. The Cytoplasmic segment spans residues 69–80 (LLTLRTIPLNKA). Residues 81 to 101 (YPLISLSYVFVYILAVVLPWF) form a helical membrane-spanning segment. The Periplasmic portion of the chain corresponds to 102 to 103 (QE). Residues 104-124 (TLSWSKTIGIIFIMLGVWLIS) form a helical membrane-spanning segment. Residues 125 to 133 (QKTEQTTSH) lie on the Cytoplasmic side of the membrane.

It belongs to the ArnF family. As to quaternary structure, heterodimer of ArnE and ArnF.

It is found in the cell inner membrane. Its pathway is bacterial outer membrane biogenesis; lipopolysaccharide biosynthesis. In terms of biological role, translocates 4-amino-4-deoxy-L-arabinose-phosphoundecaprenol (alpha-L-Ara4N-phosphoundecaprenol) from the cytoplasmic to the periplasmic side of the inner membrane. In Proteus mirabilis (strain HI4320), this protein is Probable 4-amino-4-deoxy-L-arabinose-phosphoundecaprenol flippase subunit ArnF.